The chain runs to 251 residues: UPF0246 protein DSY0297 (251 aa).

The protein belongs to the UPF0246 family.

The chain is UPF0246 protein DSY0297 from Desulfitobacterium hafniense (strain Y51).